The sequence spans 87 residues: HssA/B-like protein 58 (87 aa).

Residues 1–13 (MTILSAITSISRP) show a composition bias toward polar residues. Residues 1–31 (MTILSAITSISRPNKSSKSVISSNGGSSLSM) are disordered. Low complexity predominate over residues 14–31 (NKSSKSVISSNGGSSLSM).

The protein belongs to the hssA/B family.

This chain is HssA/B-like protein 58 (hssl58), found in Dictyostelium discoideum (Social amoeba).